The sequence spans 607 residues: V-type proton ATPase catalytic subunit A (607 aa).

Position 251-258 (251-258 (GAFGCGKT)) interacts with ATP.

The protein belongs to the ATPase alpha/beta chains family. In terms of assembly, V-ATPase is a heteromultimeric enzyme composed of a peripheral catalytic V1 complex (components A to H) attached to an integral membrane V0 proton pore complex (components: a, c, c', c'', d, e, f and VOA1).

Its subcellular location is the vacuole membrane. The enzyme catalyses ATP + H2O + 4 H(+)(in) = ADP + phosphate + 5 H(+)(out). Functionally, catalytic subunit of the V1 complex of vacuolar(H+)-ATPase (V-ATPase), a multisubunit enzyme composed of a peripheral complex (V1) that hydrolyzes ATP and a membrane integral complex (V0) that translocates protons. V-ATPase is responsible for acidifying and maintaining the pH of intracellular compartments. The chain is V-type proton ATPase catalytic subunit A (VMA1) from Encephalitozoon cuniculi (strain GB-M1) (Microsporidian parasite).